The following is a 157-amino-acid chain: MNFYDFSAVKMNGETVSMSDYKGKVVIVVNTASKCGFTPQFEGLEKLYETYKDQGLEILGFPCNQFANQDAGENTEINEFCQLNYGVTFTMFQKIKVNGKEAHPLYQFLKKEAKGALSGTIKWNFTKFLIDRDGQVIERFAPKTEPEEMEEEIKKLL.

Cysteine 35 is a catalytic residue.

Belongs to the glutathione peroxidase family.

It catalyses the reaction 2 glutathione + H2O2 = glutathione disulfide + 2 H2O. This Lactococcus lactis subsp. cremoris (strain MG1363) protein is Glutathione peroxidase (gpo).